The primary structure comprises 1119 residues: DNA-directed RNA polymerase D subunit 2b (1119 aa).

D732 lines the Mg(2+) pocket. Zn(2+)-binding residues include C1055, C1058, C1080, and C1083. Residues 1055 to 1083 (CRKCKTYANVIERTPSSGRKIRGPYCRVC) form a C4-type zinc finger.

Belongs to the RNA polymerase beta chain family. In terms of assembly, component of the RNA polymerase IVa and IVb (Pol IV) complexes.

The protein localises to the nucleus. It carries out the reaction RNA(n) + a ribonucleoside 5'-triphosphate = RNA(n+1) + diphosphate. Its function is as follows. DNA-dependent RNA polymerase catalyzes the transcription of DNA into RNA using the four ribonucleoside triphosphates as substrates. Second largest component of RNA polymerase IVa and IVb which mediate short-interfering RNAs (siRNA) accumulation and subsequent RNA-directed DNA methylation-dependent (RdDM) silencing of endogenous repeated sequences, including transposable largest subunit. Also required for full erasure of methylation elements. Required for intercellular RNA interference (RNAi) leading to systemic post-transcriptional gene silencing. The polypeptide is DNA-directed RNA polymerase D subunit 2b (NRPD2b) (Arabidopsis thaliana (Mouse-ear cress)).